Reading from the N-terminus, the 292-residue chain is ATP synthase gamma chain (292 aa).

This sequence belongs to the ATPase gamma chain family. As to quaternary structure, F-type ATPases have 2 components, CF(1) - the catalytic core - and CF(0) - the membrane proton channel. CF(1) has five subunits: alpha(3), beta(3), gamma(1), delta(1), epsilon(1). CF(0) has three main subunits: a, b and c.

The protein localises to the cell inner membrane. Its function is as follows. Produces ATP from ADP in the presence of a proton gradient across the membrane. The gamma chain is believed to be important in regulating ATPase activity and the flow of protons through the CF(0) complex. This is ATP synthase gamma chain from Hyphomonas neptunium (strain ATCC 15444).